We begin with the raw amino-acid sequence, 429 residues long: Uterine milk protein (429 aa).

Residues 1–25 form the signal peptide; that stretch reads MSHRRMQLALSLVFILCGLFNSIFC. 2 N-linked (GlcNAc...) asparagine glycosylation sites follow: Asn222 and Asn268.

Belongs to the serpin family. UTMP subfamily. In terms of processing, glycosylated; carries the so-called mannose 6-phosphate lysosomal recognition marker on its carbohydrate chains. As to expression, secreted by ovine endometrium under the influence of progesterone.

In Ovis aries (Sheep), this protein is Uterine milk protein.